Consider the following 122-residue polypeptide: MIQMQTYLTIADNTGGKVAQCIKVLGGSKRRYAKIGDIITIVVKQAIPNSSVKKGDVYKAVIVRTSKEVRRKNGTYVRFDDNACVILDANLSPRGKRVFGPVARELRDANFMKVVSLASEVI.

It belongs to the universal ribosomal protein uL14 family. In terms of assembly, part of the 50S ribosomal subunit. Forms a cluster with proteins L3 and L19. In the 70S ribosome, L14 and L19 interact and together make contacts with the 16S rRNA in bridges B5 and B8.

In terms of biological role, binds to 23S rRNA. Forms part of two intersubunit bridges in the 70S ribosome. In Borreliella burgdorferi (strain ATCC 35210 / DSM 4680 / CIP 102532 / B31) (Borrelia burgdorferi), this protein is Large ribosomal subunit protein uL14.